A 280-amino-acid polypeptide reads, in one-letter code: Myb family transcription factor PHL11 (280 aa).

The 61-residue stretch at 20-80 (RDPKPRLRWT…HLQKYRLGQQ (61 aa)) folds into the HTH myb-type domain. A DNA-binding region (H-T-H motif) is located at residues 51–76 (PKSVLKLMGLKGLTLYHLKSHLQKYR). The tract at residues 77-98 (LGQQQGKKQNRTEQNKENAGSS) is disordered. Positions 129–149 (AEAMRHQVDAQQRFQEQLEVQ) are coiled coil. Positions 142–147 (FQEQLE) match the LHEQLE motif.

The protein belongs to the MYB-CC family.

The protein localises to the nucleus. The sequence is that of Myb family transcription factor PHL11 from Arabidopsis thaliana (Mouse-ear cress).